Consider the following 141-residue polypeptide: Large ribosomal subunit protein uL11c (141 aa).

The protein belongs to the universal ribosomal protein uL11 family. As to quaternary structure, part of the ribosomal stalk of the 50S ribosomal subunit. Interacts with L10 and the large rRNA to form the base of the stalk. L10 forms an elongated spine to which L12 dimers bind in a sequential fashion forming a multimeric L10(L12)X complex.

It localises to the plastid. The protein localises to the cyanelle. Forms part of the ribosomal stalk which helps the ribosome interact with GTP-bound translation factors. This is Large ribosomal subunit protein uL11c from Cyanophora paradoxa.